Here is a 797-residue protein sequence, read N- to C-terminus: Protocadherin beta-11 (797 aa).

Residues M1–A26 form the signal peptide. Residues G27–L690 lie on the Extracellular side of the membrane. 5 consecutive Cadherin domains span residues V35–F133, M138–F242, Y247–I347, I352–F451, and Y456–V561. N-linked (GlcNAc...) asparagine glycosylation is found at N418, N436, N487, and N567. Residues G568–L671 enclose the Cadherin 6 domain. Residues V691–V711 form a helical membrane-spanning segment. Residues R712 to F797 are Cytoplasmic-facing.

It localises to the cell membrane. Potential calcium-dependent cell-adhesion protein. May be involved in the establishment and maintenance of specific neuronal connections in the brain. This chain is Protocadherin beta-11 (PCDHB11), found in Pan troglodytes (Chimpanzee).